Reading from the N-terminus, the 1046-residue chain is uncharacterized protein (1046 aa).

The segment covering 594–615 has biased composition (low complexity); sequence LNSIPSDSSSSGSSRKSSPRGS. Residues 594-622 are disordered; it reads LNSIPSDSSSSGSSRKSSPRGSPNLGEAP.

This is an uncharacterized protein from Invertebrate iridescent virus 6 (IIV-6).